A 303-amino-acid chain; its full sequence is uncharacterized protein (303 aa).

One can recognise a Fe2OG dioxygenase domain in the interval 173 to 300; that stretch reads KLPELLGQLN…RFTVNGWIRK (128 aa).

Requires Fe(2+) as cofactor. L-ascorbate is required as a cofactor.

This is an uncharacterized protein from Synechocystis sp. (strain ATCC 27184 / PCC 6803 / Kazusa).